Here is a 123-residue protein sequence, read N- to C-terminus: Nitrogen fixation nifHD1 region GlnB-like protein 2 (123 aa).

This sequence belongs to the P(II) protein family.

Functionally, could be involved in the regulation of nitrogen fixation. The polypeptide is Nitrogen fixation nifHD1 region GlnB-like protein 2 (glnBB) (Methanosarcina barkeri).